The sequence spans 874 residues: Pyruvate, phosphate dikinase (874 aa).

The segment at 2–340 is N-terminal; that stretch reads AKWVYKFEEG…LYFLQTRNGK (339 aa). Residue arginine 92 coordinates ATP. The tract at residues 340–399 is linker 1; sequence KRTAPAALQIACDLVDEGMITEEEAVVRIEAKSLDQLLHPTFNPAALKAGEVIGSALPAS. The central stretch occupies residues 400 to 498; the sequence is PGAAAGKVYF…TFAEGDYISL (99 aa). Residue threonine 453 is modified to Phosphothreonine; by PDRP1. Histidine 455 serves as the catalytic Tele-phosphohistidine intermediate. A linker 2 region spans residues 499–533; sequence DGSTGKIYKGDIETQEASVSGSFERIMVWADKFRT. The C-terminal stretch occupies residues 534–874; it reads LKVRTNADTP…AAAQAALNNK (341 aa). Substrate-binding residues include arginine 561, arginine 617, glutamate 745, glycine 766, threonine 767, asparagine 768, and aspartate 769. Residue glutamate 745 coordinates Mg(2+). Position 769 (aspartate 769) interacts with Mg(2+). Cysteine 831 acts as the Proton donor in catalysis.

This sequence belongs to the PEP-utilizing enzyme family. Homodimer. Mg(2+) serves as cofactor. Post-translationally, phosphorylation of Thr-453 in the dark inactivates the enzyme. Dephosphorylation upon light stimulation reactivates the enzyme.

It carries out the reaction pyruvate + phosphate + ATP = phosphoenolpyruvate + AMP + diphosphate + H(+). Activated by light-induced dephosphorylation. Inhibited by dark-induced phosphorylation. Both reactions are catalyzed by PDRP1. Its function is as follows. Catalyzes the reversible phosphorylation of pyruvate and phosphate. In E.histolytica and C.symbiosus, PPDK functions in the direction of ATP synthesis. The chain is Pyruvate, phosphate dikinase (ppdK) from Clostridium symbiosum (Bacteroides symbiosus).